A 293-amino-acid polypeptide reads, in one-letter code: Deubiquitinase OTUD6B (293 aa).

Methionine 1 is modified (N-acetylmethionine). Residues 147-284 enclose the OTU domain; sequence LEIKQIPSDG…GEHYNSVTRL (138 aa). Residues 152-158 are cys-loop; it reads IPSDGHC. Aspartate 155 is a catalytic residue. The Nucleophile role is filled by cysteine 158. Residues 219–229 form a variable-loop region; the sequence is IVNTAAWGGQL. Positions 267–277 are his-loop; that stretch reads YMRHAYGLGEH. Residue histidine 277 is part of the active site.

As to quaternary structure, interacts with the eukaryotic translation initiation factor 4F complex.

It catalyses the reaction Thiol-dependent hydrolysis of ester, thioester, amide, peptide and isopeptide bonds formed by the C-terminal Gly of ubiquitin (a 76-residue protein attached to proteins as an intracellular targeting signal).. In terms of biological role, deubiquitinating enzyme that may play a role in the ubiquitin-dependent regulation of protein synthesis, downstream of mTORC1. May associate with the protein synthesis initiation complex and modify its ubiquitination to repress translation. May also repress DNA synthesis and modify different cellular targets thereby regulating cell growth and proliferation. May also play a role in proteasome assembly and function. Stimulates protein synthesis. Influences the expression of CCND1/cyclin D1 by promoting its translation and regulates MYC/c-Myc protein stability. This chain is Deubiquitinase OTUD6B, found in Homo sapiens (Human).